The primary structure comprises 480 residues: Glycogen synthase (480 aa).

This sequence belongs to the glycosyltransferase 1 family. Bacterial/plant glycogen synthase subfamily.

The enzyme catalyses [(1-&gt;4)-alpha-D-glucosyl](n) + ADP-alpha-D-glucose = [(1-&gt;4)-alpha-D-glucosyl](n+1) + ADP + H(+). It functions in the pathway glycan biosynthesis; glycogen biosynthesis. Its function is as follows. Synthesizes alpha-1,4-glucan chains using ADP-glucose. The chain is Glycogen synthase from Rhizobium etli (strain ATCC 51251 / DSM 11541 / JCM 21823 / NBRC 15573 / CFN 42).